The chain runs to 120 residues: MKQANRLTKREEYSQVLARGGTYIGPLAIMKTLPNNLELSRVGFIVSKKVGGAVERNRAKRILRESLRTTGLKQGWDIVFIARAKAATVKCAEMERVVKHLLGKAQILSKTDEKTSFKTD.

This sequence belongs to the RnpA family. Consists of a catalytic RNA component (M1 or rnpB) and a protein subunit.

The catalysed reaction is Endonucleolytic cleavage of RNA, removing 5'-extranucleotides from tRNA precursor.. Its function is as follows. RNaseP catalyzes the removal of the 5'-leader sequence from pre-tRNA to produce the mature 5'-terminus. It can also cleave other RNA substrates such as 4.5S RNA. The protein component plays an auxiliary but essential role in vivo by binding to the 5'-leader sequence and broadening the substrate specificity of the ribozyme. The sequence is that of Ribonuclease P protein component from Dehalococcoides mccartyi (strain CBDB1).